We begin with the raw amino-acid sequence, 443 residues long: Xaa-Pro dipeptidase (443 aa).

Positions 246, 257, 339, 384, and 423 each coordinate Mn(2+).

This sequence belongs to the peptidase M24B family. Bacterial-type prolidase subfamily. Requires Mn(2+) as cofactor.

The enzyme catalyses Xaa-L-Pro dipeptide + H2O = an L-alpha-amino acid + L-proline. In terms of biological role, splits dipeptides with a prolyl residue in the C-terminal position. This is Xaa-Pro dipeptidase from Citrobacter koseri (strain ATCC BAA-895 / CDC 4225-83 / SGSC4696).